Consider the following 944-residue polypeptide: UvrABC system protein A (944 aa).

33–40 (GLSGSGKS) lines the ATP pocket. The segment at 252-279 (CPICGFSIGELEPRMFSFNSPFGACPTC) adopts a C4-type zinc-finger fold. 2 ABC transporter domains span residues 309–587 (WEPT…KKSL) and 607–935 (ITDR…QYLK). ATP is bound at residue 639–646 (GVSGSGKS). A C4-type zinc finger spans residues 738–764 (CEACKGDGIIKIEMHFLPDVYVPCEVC).

It belongs to the ABC transporter superfamily. UvrA family. Forms a heterotetramer with UvrB during the search for lesions.

It is found in the cytoplasm. Its function is as follows. The UvrABC repair system catalyzes the recognition and processing of DNA lesions. UvrA is an ATPase and a DNA-binding protein. A damage recognition complex composed of 2 UvrA and 2 UvrB subunits scans DNA for abnormalities. When the presence of a lesion has been verified by UvrB, the UvrA molecules dissociate. The protein is UvrABC system protein A of Staphylococcus epidermidis (strain ATCC 35984 / DSM 28319 / BCRC 17069 / CCUG 31568 / BM 3577 / RP62A).